A 304-amino-acid chain; its full sequence is Glutaminase (304 aa).

The substrate site is built by Ser-63, Asn-114, Glu-158, Asn-165, Tyr-189, Tyr-240, and Val-258.

It belongs to the glutaminase family. In terms of assembly, homotetramer.

The enzyme catalyses L-glutamine + H2O = L-glutamate + NH4(+). This is Glutaminase from Shewanella baltica (strain OS223).